The primary structure comprises 444 residues: tRNA modification GTPase MnmE (444 aa).

(6S)-5-formyl-5,6,7,8-tetrahydrofolate contacts are provided by Arg-23, Glu-82, and Lys-121. In terms of domain architecture, TrmE-type G spans 216-365 (GTSIVLAGLP…LKQALQKWLN (150 aa)). Asn-226 provides a ligand contact to K(+). GTP contacts are provided by residues 226 to 231 (NAGKSS), 245 to 251 (TDIPGTT), and 270 to 273 (DSAG). Ser-230 is a binding site for Mg(2+). Residues Thr-245, Ile-247, and Thr-250 each coordinate K(+). Thr-251 contacts Mg(2+). (6S)-5-formyl-5,6,7,8-tetrahydrofolate is bound at residue Lys-444.

Belongs to the TRAFAC class TrmE-Era-EngA-EngB-Septin-like GTPase superfamily. TrmE GTPase family. In terms of assembly, homodimer. Heterotetramer of two MnmE and two MnmG subunits. Requires K(+) as cofactor.

The protein resides in the cytoplasm. In terms of biological role, exhibits a very high intrinsic GTPase hydrolysis rate. Involved in the addition of a carboxymethylaminomethyl (cmnm) group at the wobble position (U34) of certain tRNAs, forming tRNA-cmnm(5)s(2)U34. The polypeptide is tRNA modification GTPase MnmE (Chlamydia trachomatis serovar A (strain ATCC VR-571B / DSM 19440 / HAR-13)).